The chain runs to 417 residues: Serine hydroxymethyltransferase 1 (417 aa).

Residues L121 and 125-127 (GHL) each bind (6S)-5,6,7,8-tetrahydrofolate. K229 is subject to N6-(pyridoxal phosphate)lysine. Residue 354–356 (SPF) participates in (6S)-5,6,7,8-tetrahydrofolate binding.

This sequence belongs to the SHMT family. Homodimer. Pyridoxal 5'-phosphate is required as a cofactor.

The protein resides in the cytoplasm. The catalysed reaction is (6R)-5,10-methylene-5,6,7,8-tetrahydrofolate + glycine + H2O = (6S)-5,6,7,8-tetrahydrofolate + L-serine. Its pathway is one-carbon metabolism; tetrahydrofolate interconversion. It functions in the pathway amino-acid biosynthesis; glycine biosynthesis; glycine from L-serine: step 1/1. Catalyzes the reversible interconversion of serine and glycine with tetrahydrofolate (THF) serving as the one-carbon carrier. This reaction serves as the major source of one-carbon groups required for the biosynthesis of purines, thymidylate, methionine, and other important biomolecules. Also exhibits THF-independent aldolase activity toward beta-hydroxyamino acids, producing glycine and aldehydes, via a retro-aldol mechanism. The protein is Serine hydroxymethyltransferase 1 of Pseudomonas fluorescens (strain ATCC BAA-477 / NRRL B-23932 / Pf-5).